Here is a 653-residue protein sequence, read N- to C-terminus: tRNA 5-methylaminomethyl-2-thiouridine biosynthesis bifunctional protein MnmC (653 aa).

The interval 1 to 233 is tRNA (mnm(5)s(2)U34)-methyltransferase; the sequence is MKTAPITPGR…KRDITVARFT (233 aa). The FAD-dependent cmnm(5)s(2)U34 oxidoreductase stretch occupies residues 258 to 653; that stretch reads IGAGLAGCAA…YALPRWRSDS (396 aa).

This sequence in the N-terminal section; belongs to the methyltransferase superfamily. tRNA (mnm(5)s(2)U34)-methyltransferase family. The protein in the C-terminal section; belongs to the DAO family. FAD is required as a cofactor.

It is found in the cytoplasm. It catalyses the reaction 5-aminomethyl-2-thiouridine(34) in tRNA + S-adenosyl-L-methionine = 5-methylaminomethyl-2-thiouridine(34) in tRNA + S-adenosyl-L-homocysteine + H(+). Functionally, catalyzes the last two steps in the biosynthesis of 5-methylaminomethyl-2-thiouridine (mnm(5)s(2)U) at the wobble position (U34) in tRNA. Catalyzes the FAD-dependent demodification of cmnm(5)s(2)U34 to nm(5)s(2)U34, followed by the transfer of a methyl group from S-adenosyl-L-methionine to nm(5)s(2)U34, to form mnm(5)s(2)U34. This Methylibium petroleiphilum (strain ATCC BAA-1232 / LMG 22953 / PM1) protein is tRNA 5-methylaminomethyl-2-thiouridine biosynthesis bifunctional protein MnmC.